A 284-amino-acid polypeptide reads, in one-letter code: uncharacterized protein (284 aa).

The protein belongs to the IIV-6 436R family.

This is an uncharacterized protein from Invertebrate iridescent virus 3 (IIV-3).